The chain runs to 133 residues: Small ribosomal subunit protein uS8 (133 aa).

It belongs to the universal ribosomal protein uS8 family. In terms of assembly, part of the 30S ribosomal subunit. Contacts proteins S5 and S12.

Its function is as follows. One of the primary rRNA binding proteins, it binds directly to 16S rRNA central domain where it helps coordinate assembly of the platform of the 30S subunit. The protein is Small ribosomal subunit protein uS8 of Thermosynechococcus vestitus (strain NIES-2133 / IAM M-273 / BP-1).